Here is a 262-residue protein sequence, read N- to C-terminus: Hydroxyethylthiazole kinase (262 aa).

M50 contributes to the substrate binding site. ATP-binding residues include R125 and T171. Position 198 (G198) interacts with substrate.

The protein belongs to the Thz kinase family. It depends on Mg(2+) as a cofactor.

It catalyses the reaction 5-(2-hydroxyethyl)-4-methylthiazole + ATP = 4-methyl-5-(2-phosphooxyethyl)-thiazole + ADP + H(+). It participates in cofactor biosynthesis; thiamine diphosphate biosynthesis; 4-methyl-5-(2-phosphoethyl)-thiazole from 5-(2-hydroxyethyl)-4-methylthiazole: step 1/1. Catalyzes the phosphorylation of the hydroxyl group of 4-methyl-5-beta-hydroxyethylthiazole (THZ). In Escherichia coli (strain K12 / MC4100 / BW2952), this protein is Hydroxyethylthiazole kinase.